The primary structure comprises 218 residues: Protein THO1 (218 aa).

The 35-residue stretch at 4–38 folds into the SAP domain; the sequence is YSSLTVVQLKDLLTKRNLSVGGLKNELVQRLIKDD. Phosphoserine is present on Ser22. Disordered stretches follow at residues 37 to 123 and 177 to 218; these read DDEE…LSPE and LVSR…GYRR. Over residues 47-57 the composition is skewed to polar residues; sequence VSPQEQNQEQG. A phosphoserine mark is found at Ser58 and Ser68. Residues 72-96 show a composition bias toward basic and acidic residues; the sequence is TEKKEVSSEPKETNEPKEENKDVQK. Composition is skewed to low complexity over residues 102–122 and 186–203; these read SATA…ALSP and SGNN…NNRS. Residues 204 to 218 show a composition bias toward basic residues; it reads RVSKNRRGNRSGYRR.

This sequence belongs to the SAP domain-containing ribonucleoprotein family. Interacts with SUB2 in the presence of RNA; this interaction facilitates RNA binding of SUB2.

In terms of biological role, facilitates RNA binding of SUB2 and likely plays a role in mRNA export. Suppressor of the transcriptional defect of HPR1 by overexpression. The protein is Protein THO1 (THO1) of Saccharomyces cerevisiae (strain ATCC 204508 / S288c) (Baker's yeast).